The primary structure comprises 388 residues: Queuine tRNA-ribosyltransferase (388 aa).

Catalysis depends on D90, which acts as the Proton acceptor. Residues 90–94 (DSGGF), D144, Q205, and G232 contribute to the substrate site. Positions 263–269 (GVGTPED) are RNA binding. The Nucleophile role is filled by D282. The interval 287–291 (TRNAR) is RNA binding; important for wobble base 34 recognition. Zn(2+)-binding residues include C320, C322, C325, and H351.

This sequence belongs to the queuine tRNA-ribosyltransferase family. In terms of assembly, homodimer. Within each dimer, one monomer is responsible for RNA recognition and catalysis, while the other monomer binds to the replacement base PreQ1. The cofactor is Zn(2+).

It catalyses the reaction 7-aminomethyl-7-carbaguanine + guanosine(34) in tRNA = 7-aminomethyl-7-carbaguanosine(34) in tRNA + guanine. It functions in the pathway tRNA modification; tRNA-queuosine biosynthesis. Functionally, catalyzes the base-exchange of a guanine (G) residue with the queuine precursor 7-aminomethyl-7-deazaguanine (PreQ1) at position 34 (anticodon wobble position) in tRNAs with GU(N) anticodons (tRNA-Asp, -Asn, -His and -Tyr). Catalysis occurs through a double-displacement mechanism. The nucleophile active site attacks the C1' of nucleotide 34 to detach the guanine base from the RNA, forming a covalent enzyme-RNA intermediate. The proton acceptor active site deprotonates the incoming PreQ1, allowing a nucleophilic attack on the C1' of the ribose to form the product. After dissociation, two additional enzymatic reactions on the tRNA convert PreQ1 to queuine (Q), resulting in the hypermodified nucleoside queuosine (7-(((4,5-cis-dihydroxy-2-cyclopenten-1-yl)amino)methyl)-7-deazaguanosine). In Campylobacter curvus (strain 525.92), this protein is Queuine tRNA-ribosyltransferase.